A 313-amino-acid polypeptide reads, in one-letter code: Glutathione synthetase (313 aa).

The ATP-grasp domain occupies 125–309; sequence KIFVTEFADL…IASLFWDAVE (185 aa). 151 to 207 is an ATP binding site; that stretch reads RKEFGDIIVKPLYGNGGAGIFHLHEADRNLASLLEMFGQLFREPYIVQRYLKDVRKG. Glu-280 and Asn-282 together coordinate Mg(2+).

This sequence belongs to the prokaryotic GSH synthase family. Requires Mg(2+) as cofactor. Mn(2+) serves as cofactor.

It carries out the reaction gamma-L-glutamyl-L-cysteine + glycine + ATP = glutathione + ADP + phosphate + H(+). The protein operates within sulfur metabolism; glutathione biosynthesis; glutathione from L-cysteine and L-glutamate: step 2/2. The sequence is that of Glutathione synthetase from Mesorhizobium japonicum (strain LMG 29417 / CECT 9101 / MAFF 303099) (Mesorhizobium loti (strain MAFF 303099)).